A 717-amino-acid chain; its full sequence is Protein Teyrha-meyrha (717 aa).

Polar residues predominate over residues 140 to 152 (FRTDSASPTCTSH). Disordered regions lie at residues 140–214 (FRTD…SNPA), 229–270 (HLAA…APPV), 440–498 (KIPP…QPGK), 511–539 (SQKD…GEAP), 563–594 (DSCG…MDTA), and 624–717 (QRRQ…DTKA). Over residues 195 to 214 (ATSSSASSSSSSSCSTSNPA) the composition is skewed to low complexity. The segment covering 235–263 (PHHHPHTHAHSHPHPLAHPHAHSHHHVGH) has biased composition (basic residues). The span at 442 to 451 (PPEDDAKSQE) shows a compositional bias: basic and acidic residues. Acidic residues predominate over residues 452–466 (EIETVDVESCNDEVP). Residues 471-482 (ELATPSSGSSGT) show a composition bias toward polar residues. Residues 513-522 (KDPHPDEHDV) are compositionally biased toward basic and acidic residues. 2 stretches are compositionally biased toward low complexity: residues 523–533 (STNVTTASSSS) and 570–580 (NDTNSSSSTHN). The segment covering 630–640 (QNVGSSRSLEN) has biased composition (polar residues). Over residues 667 to 686 (NNNNNNNNNNNNSNSNNNNN) the composition is skewed to low complexity. Residues 687-704 (PSTKYAESMENSLSQLSS) are compositionally biased toward polar residues.

In terms of tissue distribution, in embryos, expressed specifically in M12 (at protein level).

It is found in the nucleus. Functionally, required for the correct synaptic targeting of motoneurons RP5 and V to muscle 12 (M12). May be involved in the negative regulation of Tl in M12. Involved in the correct patterning of veins in the proximal (costal) region of the wing blade. The polypeptide is Protein Teyrha-meyrha (Drosophila melanogaster (Fruit fly)).